The sequence spans 255 residues: Tumor necrosis factor receptor superfamily member 9 (255 aa).

The first 23 residues, 1-23 (MGNSCYNIVATLLLVLNFERTRS), serve as a signal peptide directing secretion. TNFR-Cys repeat units follow at residues 24-45 (LQDPCSNCPAGTFCDNNRNQIC), 47-86 (PCPPNSFSSAGGQRTCDICRQCKGVFRTRKECSSTSNAEC), 87-118 (DCTPGFHCLGAGCSMCEQDCKQGQELTKKGCK), and 119-159 (DCCF…VVCG). Residues 24–186 (LQDPCSNCPA…PAREPGHSPQ (163 aa)) are Extracellular-facing. 9 cysteine pairs are disulfide-bonded: C28-C37, C31-C45, C48-C62, C65-C78, C68-C86, C88-C94, C99-C106, C102-C117, and C121-C133. N-linked (GlcNAc...) asparagine glycans are attached at residues N138 and N149. A disulfide bond links C139 and C158. The interval 161–180 (SPADLSPGASSVTPPAPARE) is disordered. Residues 187–213 (IISFFLALTSTALLFLLFFLTLRFSVV) traverse the membrane as a helical segment. The Cytoplasmic portion of the chain corresponds to 214-255 (KRGRKKLLYIFKQPFMRPVQTTQEEDGCSCRFPEEEEGGCEL). Residues 214-255 (KRGRKKLLYIFKQPFMRPVQTTQEEDGCSCRFPEEEEGGCEL) are interaction with LRR-1.

Predominantly homodimeric, but may also exist as a monomer. Interacts with TRAF1, TRAF2 and TRAF3. Interacts with LRR-repeat protein 1/LRR-1. As to expression, expressed on the surface of activated T-cells.

It localises to the cell membrane. Its function is as follows. Receptor for TNFSF9/4-1BBL. Conveys a signal that enhances CD8(+) T-cell survival, cytotoxicity, and mitochondrial activity, thereby promoting immunity against viruses and tumors. In Homo sapiens (Human), this protein is Tumor necrosis factor receptor superfamily member 9 (TNFRSF9).